Here is a 70-residue protein sequence, read N- to C-terminus: Translational regulator CsrA (70 aa).

This sequence belongs to the CsrA/RsmA family. As to quaternary structure, homodimer; the beta-strands of each monomer intercalate to form a hydrophobic core, while the alpha-helices form wings that extend away from the core.

It is found in the cytoplasm. A key translational regulator that binds mRNA to regulate translation initiation and/or mRNA stability. Mediates global changes in gene expression, shifting from rapid growth to stress survival by linking envelope stress, the stringent response and the catabolite repression systems. Usually binds in the 5'-UTR; binding at or near the Shine-Dalgarno sequence prevents ribosome-binding, repressing translation, binding elsewhere in the 5'-UTR can activate translation and/or stabilize the mRNA. Its function is antagonized by small RNA(s). This is Translational regulator CsrA from Hydrogenovibrio crunogenus (strain DSM 25203 / XCL-2) (Thiomicrospira crunogena).